The following is a 130-amino-acid chain: Small ribosomal subunit protein uS8 (130 aa).

Belongs to the universal ribosomal protein uS8 family. As to quaternary structure, part of the 30S ribosomal subunit.

Its function is as follows. One of the primary rRNA binding proteins, it binds directly to 16S rRNA central domain where it helps coordinate assembly of the platform of the 30S subunit. The protein is Small ribosomal subunit protein uS8 of Methanoculleus marisnigri (strain ATCC 35101 / DSM 1498 / JR1).